A 137-amino-acid polypeptide reads, in one-letter code: 6,7-dimethyl-8-ribityllumazine synthase (137 aa).

Residues Phe11, 43 to 45, and 67 to 69 contribute to the 5-amino-6-(D-ribitylamino)uracil site; these read SFD and CVI. Position 72-73 (72-73) interacts with (2S)-2-hydroxy-3-oxobutyl phosphate; sequence DT. Residue His75 is the Proton donor of the active site. 5-amino-6-(D-ribitylamino)uracil is bound at residue Leu100. Arg115 provides a ligand contact to (2S)-2-hydroxy-3-oxobutyl phosphate.

Belongs to the DMRL synthase family. As to quaternary structure, forms an icosahedral capsid composed of 60 subunits, arranged as a dodecamer of pentamers.

The catalysed reaction is (2S)-2-hydroxy-3-oxobutyl phosphate + 5-amino-6-(D-ribitylamino)uracil = 6,7-dimethyl-8-(1-D-ribityl)lumazine + phosphate + 2 H2O + H(+). It functions in the pathway cofactor biosynthesis; riboflavin biosynthesis; riboflavin from 2-hydroxy-3-oxobutyl phosphate and 5-amino-6-(D-ribitylamino)uracil: step 1/2. Its function is as follows. Catalyzes the formation of 6,7-dimethyl-8-ribityllumazine by condensation of 5-amino-6-(D-ribitylamino)uracil with 3,4-dihydroxy-2-butanone 4-phosphate. This is the penultimate step in the biosynthesis of riboflavin. This is 6,7-dimethyl-8-ribityllumazine synthase from Methanococcus maripaludis (strain C5 / ATCC BAA-1333).